The following is a 114-amino-acid chain: PDZK1-interacting protein 1 (114 aa).

Residues 1–28 lie on the Extracellular side of the membrane; it reads MSALSLLILGLLTAVPPASCQQGLGNLQ. A helical membrane pass occupies residues 29–51; sequence PWMQGLIAVAVFLVLVAIAFAVN. Residues 52–114 lie on the Cytoplasmic side of the membrane; sequence HFWCQEEPEP…EEGKVRSTPM (63 aa). The residue at position 85 (serine 85) is a Phosphoserine. Residues 94 to 114 form a disordered region; sequence EHENAYENVPEEEGKVRSTPM. Basic and acidic residues predominate over residues 105 to 114; it reads EEGKVRSTPM.

The protein belongs to the PDZK1-interacting protein 1/SMIM24 family. In terms of assembly, forms a heterodimer (via N-terminal transmembrane helix) with SLC5A2/SGLT2 (via TM13); this interaction enhances SLC5A2 transporter activity. Interacts with PDZK1.

Its subcellular location is the apical cell membrane. Auxiliary protein of electrogenic Na(+)-coupled sugar symporter SLC5A2/SGLT2 and SLC5A1/SGLT1. Essential for the transporter activity of SLC5A2/SGLT2 but not SLC5A1/SGLT1. The protein is PDZK1-interacting protein 1 of Homo sapiens (Human).